The primary structure comprises 513 residues: GMP synthase [glutamine-hydrolyzing] (513 aa).

The region spanning 5–195 (LVLVIDFGGQ…VYNICGCTGD (191 aa)) is the Glutamine amidotransferase type-1 domain. Cys-82 acts as the Nucleophile in catalysis. Active-site residues include His-169 and Glu-171. In terms of domain architecture, GMPS ATP-PPase spans 196 to 388 (WKMDSFVEKT…LGIPEKLVFR (193 aa)). Residue 223 to 229 (SGGVDSS) coordinates ATP.

Homodimer.

The enzyme catalyses XMP + L-glutamine + ATP + H2O = GMP + L-glutamate + AMP + diphosphate + 2 H(+). Its pathway is purine metabolism; GMP biosynthesis; GMP from XMP (L-Gln route): step 1/1. Functionally, catalyzes the synthesis of GMP from XMP. This Clostridium botulinum (strain Alaska E43 / Type E3) protein is GMP synthase [glutamine-hydrolyzing].